The sequence spans 308 residues: MSWLEKILEKSNIVSSRKASIPEGVWTKCTSCEQVLYHAELERNLEVCPKCNHHMRMKARRRLETFLDEGNRVELGGELEPQDKLKFKDSKRYKERIAAAQKSSGEKDALVAMKGELLGMPIVACAFEFSFMGGSMGSVVGARFVRAVEAAMENNCALVCFSASGGARMQEALMSLMQMAKTSAALERLSAKGLPFISVMTDPTMGGVSASLAMLGDINIGEPKALIGFAGRRVIEQTVREDLPEGFQRSEFLLEHGAIDMIVDRREMRQRVGGLIAKLTNHKSPLVVSVNDSPNEAAYSVPEANEKG.

The CoA carboxyltransferase N-terminal domain maps to Val-25–Pro-294. Residues Cys-29, Cys-32, Cys-48, and Cys-51 each contribute to the Zn(2+) site. The segment at Cys-29 to Cys-51 adopts a C4-type zinc-finger fold.

This sequence belongs to the AccD/PCCB family. Acetyl-CoA carboxylase is a heterohexamer composed of biotin carboxyl carrier protein (AccB), biotin carboxylase (AccC) and two subunits each of ACCase subunit alpha (AccA) and ACCase subunit beta (AccD). The cofactor is Zn(2+).

The protein localises to the cytoplasm. The enzyme catalyses N(6)-carboxybiotinyl-L-lysyl-[protein] + acetyl-CoA = N(6)-biotinyl-L-lysyl-[protein] + malonyl-CoA. Its pathway is lipid metabolism; malonyl-CoA biosynthesis; malonyl-CoA from acetyl-CoA: step 1/1. Functionally, component of the acetyl coenzyme A carboxylase (ACC) complex. Biotin carboxylase (BC) catalyzes the carboxylation of biotin on its carrier protein (BCCP) and then the CO(2) group is transferred by the transcarboxylase to acetyl-CoA to form malonyl-CoA. The chain is Acetyl-coenzyme A carboxylase carboxyl transferase subunit beta from Vibrio vulnificus (strain CMCP6).